The sequence spans 509 residues: Midnolin (509 aa).

Residues 1–12 (MDQHPSARSCSS) show a composition bias toward polar residues. A disordered region spans residues 1–27 (MDQHPSARSCSSRGAAPSCESVSGEPP). The Ubiquitin-like domain occupies 28–102 (MNLYIHSTTG…LTLVPTVEAG (75 aa)). Disordered stretches follow at residues 172 to 295 (GSSE…NTPL), 370 to 404 (QCTS…ETQP), and 448 to 485 (KRLR…EGSL). Low complexity predominate over residues 176–190 (GTTGLSHGASGSASG). The span at 196 to 209 (HNPHPHHPHQHPHH) shows a compositional bias: basic residues. The span at 220–231 (AFPPSPSIPSIP) shows a compositional bias: pro residues. The span at 261–285 (PSSACAPSPSSPSPAASCPEASCSA) shows a compositional bias: low complexity. A compositionally biased stretch (polar residues) spans 286-295 (KTSGNCNTPL). Positions 376-386 (SPAPSPPPSPP) are enriched in pro residues. Over residues 387–400 (HTTGLTGLPTTVPS) the composition is skewed to low complexity.

Its subcellular location is the nucleus. It is found in the cytoplasm. The protein resides in the cytosol. The protein localises to the nucleolus. Functionally, facilitates ubiquitin-independent proteasomal degradation of polycomb protein CBX4. Plays a role in inhibiting the activity of glucokinase GCK and both glucose-induced and basal insulin secretion. The protein is Midnolin (midn) of Danio rerio (Zebrafish).